We begin with the raw amino-acid sequence, 181 residues long: MTDVDIKIENIVASATLGKSIDLQTVAEALENVDFNREQFPGLVYKLKEPKTAALIFGSGKLVCTGAKSIEDSKRAIKLTVDMMRTMDPDIPEEFEIKIQNIVASANLGKPLNLEAVALGLENTEYEPEQFPGLVYRLDDPKVVLLLFGSGKVVCTGAKSAEDAKLGVEKTKARLAELDLI.

Repeat copies occupy residues 8–84 (IENI…VDMM) and 99–175 (IQNI…KARL).

The protein belongs to the TBP family.

Functionally, general factor that plays a role in the activation of archaeal genes transcribed by RNA polymerase. Binds specifically to the TATA box promoter element which lies close to the position of transcription initiation. The polypeptide is TATA-box-binding protein (tbp) (Methanothermobacter thermautotrophicus (strain ATCC 29096 / DSM 1053 / JCM 10044 / NBRC 100330 / Delta H) (Methanobacterium thermoautotrophicum)).